Consider the following 117-residue polypeptide: Flagellar transcriptional regulator FlhD (117 aa).

It belongs to the FlhD family. Homodimer; disulfide-linked. Forms a heterohexamer composed of two FlhC and four FlhD subunits. Each FlhC binds a FlhD dimer, forming a heterotrimer, and a hexamer assembles by dimerization of two heterotrimers.

The protein localises to the cytoplasm. Its function is as follows. Functions in complex with FlhC as a master transcriptional regulator that regulates transcription of several flagellar and non-flagellar operons by binding to their promoter region. Activates expression of class 2 flagellar genes, including fliA, which is a flagellum-specific sigma factor that turns on the class 3 genes. Also regulates genes whose products function in a variety of physiological pathways. The chain is Flagellar transcriptional regulator FlhD from Photorhabdus laumondii subsp. laumondii (strain DSM 15139 / CIP 105565 / TT01) (Photorhabdus luminescens subsp. laumondii).